Here is a 432-residue protein sequence, read N- to C-terminus: Chorismate synthase aro-2 (432 aa).

Residues His17, His106, and Asp367 contribute to the active site. A disordered region spans residues 406–432 (LKQTINSGKDTVGNGVSENVQESDLAQ). The span at 408 to 432 (QTINSGKDTVGNGVSENVQESDLAQ) shows a compositional bias: polar residues.

The protein belongs to the chorismate synthase family. In terms of assembly, homotetramer.

It carries out the reaction 5-O-(1-carboxyvinyl)-3-phosphoshikimate = chorismate + phosphate. The enzyme catalyses FMNH2 + NADP(+) = FMN + NADPH + 2 H(+). It participates in metabolic intermediate biosynthesis; chorismate biosynthesis; chorismate from D-erythrose 4-phosphate and phosphoenolpyruvate: step 7/7. Bifunctional chorismate synthase and flavin reductase that catalyzes the conversion of 5-enolpyruvylshikimate 3-phosphate (EPSP) to form chorismate, which is the last common intermediate in the synthesis of the three aromatic amino acids phenylalanine, tyrosine and tryptophan. Acts also as a flavin reductase (FR) able to generate reduced flavin mononucleotide in the presence of NADPH. This is Chorismate synthase aro-2 from Neurospora crassa (strain ATCC 24698 / 74-OR23-1A / CBS 708.71 / DSM 1257 / FGSC 987).